A 266-amino-acid polypeptide reads, in one-letter code: MLHVSMVGCGAIGRGVLELLKSDPDVVFDVVIVPEHTMDEARGAVSALAPRARVATHLDDQRPDLLVECAGHHALEEHIVPALERGIPCMVVSVGALSEPGMAERLEAAARRGGTQVQLLSGAIGAIDALAAARVGGLDEVIYTGRKPARAWTGTPAEQLFDLEALTEATVIFEGTARDAARLYPKNANVAATVSLAGLGLDRTAVKLLADPHAVENVHHVEARGAFGGFELTMRGKPLAANPKTSALTVFSVVRALGNRAHAVSI.

Residues Ala123 and Asn189 each contribute to the NAD(+) site. The active site involves His219.

It belongs to the L-aspartate dehydrogenase family.

The catalysed reaction is L-aspartate + NADP(+) + H2O = oxaloacetate + NH4(+) + NADPH + H(+). It catalyses the reaction L-aspartate + NAD(+) + H2O = oxaloacetate + NH4(+) + NADH + H(+). Its pathway is cofactor biosynthesis; NAD(+) biosynthesis; iminoaspartate from L-aspartate (dehydrogenase route): step 1/1. In terms of biological role, specifically catalyzes the NAD or NADP-dependent dehydrogenation of L-aspartate to iminoaspartate. This is L-aspartate dehydrogenase from Cupriavidus taiwanensis (strain DSM 17343 / BCRC 17206 / CCUG 44338 / CIP 107171 / LMG 19424 / R1) (Ralstonia taiwanensis (strain LMG 19424)).